A 346-amino-acid polypeptide reads, in one-letter code: Phosphoribosylformylglycinamidine cyclo-ligase (346 aa).

Belongs to the AIR synthase family.

The protein resides in the cytoplasm. The enzyme catalyses 2-formamido-N(1)-(5-O-phospho-beta-D-ribosyl)acetamidine + ATP = 5-amino-1-(5-phospho-beta-D-ribosyl)imidazole + ADP + phosphate + H(+). The protein operates within purine metabolism; IMP biosynthesis via de novo pathway; 5-amino-1-(5-phospho-D-ribosyl)imidazole from N(2)-formyl-N(1)-(5-phospho-D-ribosyl)glycinamide: step 2/2. This is Phosphoribosylformylglycinamidine cyclo-ligase from Photorhabdus laumondii subsp. laumondii (strain DSM 15139 / CIP 105565 / TT01) (Photorhabdus luminescens subsp. laumondii).